Consider the following 175-residue polypeptide: Co-chaperone protein HscB homolog (175 aa).

One can recognise a J domain in the interval Ser-7 to Leu-79.

Belongs to the HscB family. In terms of assembly, interacts with HscA and stimulates its ATPase activity.

Functionally, co-chaperone involved in the maturation of iron-sulfur cluster-containing proteins. Seems to help targeting proteins to be folded toward HscA. The protein is Co-chaperone protein HscB homolog of Burkholderia multivorans (strain ATCC 17616 / 249).